A 341-amino-acid polypeptide reads, in one-letter code: Phosphate acyltransferase (341 aa).

Belongs to the PlsX family. In terms of assembly, homodimer. Probably interacts with PlsY.

It localises to the cytoplasm. The enzyme catalyses a fatty acyl-[ACP] + phosphate = an acyl phosphate + holo-[ACP]. It participates in lipid metabolism; phospholipid metabolism. Catalyzes the reversible formation of acyl-phosphate (acyl-PO(4)) from acyl-[acyl-carrier-protein] (acyl-ACP). This enzyme utilizes acyl-ACP as fatty acyl donor, but not acyl-CoA. The chain is Phosphate acyltransferase from Nostoc sp. (strain PCC 7120 / SAG 25.82 / UTEX 2576).